The sequence spans 465 residues: Nuclear pore complex protein NUP50B (465 aa).

Disordered stretches follow at residues 1-44 (MGDS…TFNT) and 59-244 (RRTD…FHQH). N-acetylglycine is present on G2. Residues 26-35 (GLDDDDEDTS) are compositionally biased toward acidic residues. Over residues 81 to 97 (PFTAPAPSTAAAETTKP) the composition is skewed to low complexity. Composition is skewed to basic and acidic residues over residues 105–127 (TLADGRSDATKETDGDSKEKSDA), 141–157 (ISAKTKDIIDGGEKEMS), and 216–233 (TEKEGKEGDGNEDTEKNG). Phosphoserine is present on S125. Repeat copies occupy residues 266–267 (FG), 286–287 (FG), and 297–298 (FG). Residues 266 to 298 (FGLVPQEGSTGSGSEQSSFSFGQANNGNSSLFG) form a 3 X 2 AA repeats of F-G region. 2 disordered regions span residues 308 to 330 (KSTETTTAFPSKQDVSVETGEEN) and 439 to 465 (HKDSKPSVAEAAAPLKTPENSPSAEDA). Phosphothreonine is present on T455. Polar residues predominate over residues 456 to 465 (PENSPSAEDA). S459 carries the post-translational modification Phosphoserine.

As to quaternary structure, part of the nuclear pore complex (NPC). The NPC has an eight-fold symmetrical structure comprising a central transport channel and two rings, the cytoplasmic and nuclear rings, to which eight filaments are attached. The cytoplasmic filaments have loose ends, while the nuclear filaments are joined in a distal ring, forming a nuclear basket. NPCs are highly dynamic in configuration and composition, and can be devided in 3 subcomplexes, the NUP62 subcomplex, the NUP107-160 subcomplex and the NUP93 subcomplex, containing approximately 30 different nucleoporin proteins.

The protein localises to the nucleus. It localises to the nucleoplasm. Its subcellular location is the nuclear pore complex. Its function is as follows. Probably involved in nucleocytoplasmic transport via its interactions with importins and Ran, rather than by forming part of the nuclear pore complex (NPC) scaffolding. This Arabidopsis thaliana (Mouse-ear cress) protein is Nuclear pore complex protein NUP50B.